The chain runs to 266 residues: 4-hydroxy-tetrahydrodipicolinate reductase (266 aa).

10–15 (GPRGRM) serves as a coordination point for NAD(+). Lys-38 is a binding site for NADP(+). NAD(+) contacts are provided by residues 99 to 101 (GTT) and 125 to 128 (APNF). His-155 (proton donor/acceptor) is an active-site residue. His-156 contacts (S)-2,3,4,5-tetrahydrodipicolinate. Residue Lys-159 is the Proton donor of the active site. 165-166 (GT) serves as a coordination point for (S)-2,3,4,5-tetrahydrodipicolinate.

This sequence belongs to the DapB family.

The protein resides in the cytoplasm. It catalyses the reaction (S)-2,3,4,5-tetrahydrodipicolinate + NAD(+) + H2O = (2S,4S)-4-hydroxy-2,3,4,5-tetrahydrodipicolinate + NADH + H(+). The enzyme catalyses (S)-2,3,4,5-tetrahydrodipicolinate + NADP(+) + H2O = (2S,4S)-4-hydroxy-2,3,4,5-tetrahydrodipicolinate + NADPH + H(+). Its pathway is amino-acid biosynthesis; L-lysine biosynthesis via DAP pathway; (S)-tetrahydrodipicolinate from L-aspartate: step 4/4. Catalyzes the conversion of 4-hydroxy-tetrahydrodipicolinate (HTPA) to tetrahydrodipicolinate. The chain is 4-hydroxy-tetrahydrodipicolinate reductase from Bacillus cereus (strain ATCC 14579 / DSM 31 / CCUG 7414 / JCM 2152 / NBRC 15305 / NCIMB 9373 / NCTC 2599 / NRRL B-3711).